We begin with the raw amino-acid sequence, 486 residues long: Membrane-bound lytic murein transglycosylase F (486 aa).

The signal sequence occupies residues 1-21 (MTRIKLNYFVIGVVALLLALA). The interval 22–268 (LWPNIPWRNG…RLEEKYLGHV (247 aa)) is non-LT domain. An LT domain region spans residues 269–486 (GSFDYVDTKT…VVGPGWSINN (218 aa)). Residue Glu313 is part of the active site.

The protein in the N-terminal section; belongs to the bacterial solute-binding protein 3 family. In the C-terminal section; belongs to the transglycosylase Slt family.

The protein localises to the cell outer membrane. It catalyses the reaction Exolytic cleavage of the (1-&gt;4)-beta-glycosidic linkage between N-acetylmuramic acid (MurNAc) and N-acetylglucosamine (GlcNAc) residues in peptidoglycan, from either the reducing or the non-reducing ends of the peptidoglycan chains, with concomitant formation of a 1,6-anhydrobond in the MurNAc residue.. Functionally, murein-degrading enzyme that degrades murein glycan strands and insoluble, high-molecular weight murein sacculi, with the concomitant formation of a 1,6-anhydromuramoyl product. Lytic transglycosylases (LTs) play an integral role in the metabolism of the peptidoglycan (PG) sacculus. Their lytic action creates space within the PG sacculus to allow for its expansion as well as for the insertion of various structures such as secretion systems and flagella. The chain is Membrane-bound lytic murein transglycosylase F from Yersinia enterocolitica serotype O:8 / biotype 1B (strain NCTC 13174 / 8081).